The primary structure comprises 352 residues: S-adenosylmethionine:tRNA ribosyltransferase-isomerase (352 aa).

This sequence belongs to the QueA family. Monomer.

The protein localises to the cytoplasm. The enzyme catalyses 7-aminomethyl-7-carbaguanosine(34) in tRNA + S-adenosyl-L-methionine = epoxyqueuosine(34) in tRNA + adenine + L-methionine + 2 H(+). It functions in the pathway tRNA modification; tRNA-queuosine biosynthesis. In terms of biological role, transfers and isomerizes the ribose moiety from AdoMet to the 7-aminomethyl group of 7-deazaguanine (preQ1-tRNA) to give epoxyqueuosine (oQ-tRNA). The polypeptide is S-adenosylmethionine:tRNA ribosyltransferase-isomerase (Bacteroides fragilis (strain ATCC 25285 / DSM 2151 / CCUG 4856 / JCM 11019 / LMG 10263 / NCTC 9343 / Onslow / VPI 2553 / EN-2)).